We begin with the raw amino-acid sequence, 265 residues long: tRNA pseudouridine synthase A (265 aa).

Catalysis depends on D58, which acts as the Nucleophile. Y116 lines the substrate pocket.

Belongs to the tRNA pseudouridine synthase TruA family. Homodimer.

It carries out the reaction uridine(38/39/40) in tRNA = pseudouridine(38/39/40) in tRNA. Functionally, formation of pseudouridine at positions 38, 39 and 40 in the anticodon stem and loop of transfer RNAs. This chain is tRNA pseudouridine synthase A, found in Neisseria meningitidis serogroup C / serotype 2a (strain ATCC 700532 / DSM 15464 / FAM18).